We begin with the raw amino-acid sequence, 371 residues long: DNA-directed RNA polymerase subunit alpha (371 aa).

Residues 1 to 248 form an alpha N-terminal domain (alpha-NTD) region; it reads MSVKYGKFEM…KHFEVFNQFN (248 aa). The segment at 264-371 is alpha C-terminal domain (alpha-CTD); the sequence is DQDELMDKLS…KELVKHEDAK (108 aa).

Belongs to the RNA polymerase alpha chain family. In terms of assembly, homodimer. The RNAP catalytic core consists of 2 alpha, 1 beta, 1 beta' and 1 omega subunit. When a sigma factor is associated with the core the holoenzyme is formed, which can initiate transcription.

The catalysed reaction is RNA(n) + a ribonucleoside 5'-triphosphate = RNA(n+1) + diphosphate. Its function is as follows. DNA-dependent RNA polymerase catalyzes the transcription of DNA into RNA using the four ribonucleoside triphosphates as substrates. The protein is DNA-directed RNA polymerase subunit alpha of Protochlamydia amoebophila (strain UWE25).